Consider the following 214-residue polypeptide: GTP cyclohydrolase 1 (214 aa).

Zn(2+)-binding residues include cysteine 108, histidine 111, and cysteine 179.

This sequence belongs to the GTP cyclohydrolase I family. As to quaternary structure, toroid-shaped homodecamer, composed of two pentamers of five dimers.

It carries out the reaction GTP + H2O = 7,8-dihydroneopterin 3'-triphosphate + formate + H(+). It functions in the pathway cofactor biosynthesis; 7,8-dihydroneopterin triphosphate biosynthesis; 7,8-dihydroneopterin triphosphate from GTP: step 1/1. The chain is GTP cyclohydrolase 1 from Shewanella loihica (strain ATCC BAA-1088 / PV-4).